Consider the following 933-residue polypeptide: Envelope glycoprotein B (933 aa).

Positions 1–36 (MPRPRPRALRGSSPGWALVAAVAVGAALLMATLAVA) are cleaved as a signal peptide. The span at 36 to 49 (AAPPGPRGPAARSP) shows a compositional bias: low complexity. The tract at residues 36-115 (AAPPGPRGPA…GNGTRSAARR (80 aa)) is disordered. Over 37–797 (APPGPRGPAA…SGVSSFLSNP (761 aa)) the chain is Virion surface. Residues 54 to 69 (ASVEPVEDGDYDEYDD) are compositionally biased toward acidic residues. Asn107 and Asn161 each carry an N-linked (GlcNAc...) asparagine; by host glycan. Disulfide bonds link Cys136/Cys596, Cys153/Cys552, Cys227/Cys291, Cys384/Cys432, and Cys619/Cys656. Involved in fusion and/or binding to host membrane regions lie at residues 193-199 (TWQGSRY) and 278-285 (AHAGFYKT). Residues Asn418 and Asn450 are each glycosylated (N-linked (GlcNAc...) asparagine; by host). N-linked (GlcNAc...) asparagine; by host glycosylation is found at Asn697 and Asn747. Hydrophobic membrane proximal region regions lie at residues 742–795 (IDRI…SFLS) and 754–795 (LMAG…SFLS). Residues 798–818 (FGALAVGLLVLAGLVAAFFAM) traverse the membrane as a helical segment. Topologically, residues 819-933 (RYIMRLRANP…SKDDEDGADP (115 aa)) are intravirion. The short motif at 881-884 (YMTL) is the Golgi targeting element. The short motif at 920–923 (YQPL) is the Internalization motif element.

This sequence belongs to the herpesviridae glycoprotein B family. As to quaternary structure, homotrimer; disulfide-linked. Binds to heparan sulfate proteoglycans. Interacts with gH/gL heterodimer.

Its subcellular location is the virion membrane. It localises to the host cell membrane. It is found in the host endosome membrane. The protein localises to the host Golgi apparatus membrane. In terms of biological role, envelope glycoprotein that forms spikes at the surface of virion envelope. Essential for the initial attachment to heparan sulfate moieties of the host cell surface proteoglycans. Involved in fusion of viral and cellular membranes leading to virus entry into the host cell. Following initial binding to its host receptors, membrane fusion is mediated by the fusion machinery composed at least of gB and the heterodimer gH/gL. May be involved in the fusion between the virion envelope and the outer nuclear membrane during virion egress. This chain is Envelope glycoprotein B, found in Herpesvirus ateles type 1 (strain Lennette).